Here is a 611-residue protein sequence, read N- to C-terminus: DNA mismatch repair protein MutL (611 aa).

The protein belongs to the DNA mismatch repair MutL/HexB family.

Functionally, this protein is involved in the repair of mismatches in DNA. It is required for dam-dependent methyl-directed DNA mismatch repair. May act as a 'molecular matchmaker', a protein that promotes the formation of a stable complex between two or more DNA-binding proteins in an ATP-dependent manner without itself being part of a final effector complex. This chain is DNA mismatch repair protein MutL, found in Rickettsia bellii (strain RML369-C).